Reading from the N-terminus, the 427-residue chain is Tyrosine--tRNA ligase (427 aa).

Residue Tyr33 coordinates L-tyrosine. A 'HIGH' region motif is present at residues 38–47 (PTAPSLHVGN). The L-tyrosine site is built by Tyr168 and Gln172. Residues 228–232 (KFGKS) carry the 'KMSKS' region motif. Residue Lys231 coordinates ATP. The region spanning 358–426 (EHMLDLVAST…GKKHHYLIKV (69 aa)) is the S4 RNA-binding domain.

It belongs to the class-I aminoacyl-tRNA synthetase family. TyrS type 1 subfamily. As to quaternary structure, homodimer.

It is found in the cytoplasm. The catalysed reaction is tRNA(Tyr) + L-tyrosine + ATP = L-tyrosyl-tRNA(Tyr) + AMP + diphosphate + H(+). Functionally, catalyzes the attachment of tyrosine to tRNA(Tyr) in a two-step reaction: tyrosine is first activated by ATP to form Tyr-AMP and then transferred to the acceptor end of tRNA(Tyr). This chain is Tyrosine--tRNA ligase, found in Amoebophilus asiaticus (strain 5a2).